Here is a 468-residue protein sequence, read N- to C-terminus: PE family protein PE3 (468 aa).

In terms of domain architecture, PE spans 1–92 (MSYVIAAPEM…AGAAYAQAEA (92 aa)). The region spanning 154–375 (PVAQYTPEQW…DLRVLVDLGY (222 aa)) is the PE-PPE domain.

This sequence belongs to the mycobacterial PE family.

The protein resides in the secreted. It localises to the cell wall. Plays significant roles in mycobacterial persistence during infection and modulates host immune response. This Mycobacterium tuberculosis (strain ATCC 25618 / H37Rv) protein is PE family protein PE3.